The chain runs to 196 residues: MLKLFCLFAAALVLFHVDITSACGSSTDSEYIQNPVFQMQISPPVGWTYFPSTPSVTSQAIWYFVGQSNDTTTAKNRADAELTAAMLEALIAANMQTQGVTIANDFQPIQIENPQTTTPTGSLYGKVEGGALVSTAPGVTTGAILTYTPYHITLRVTVNNIGATRFYWNIAENTFLQKMTMNYKAQFTGDVTVTKV.

This is an uncharacterized protein from Caenorhabditis elegans.